Here is a 661-residue protein sequence, read N- to C-terminus: tRNA uridine 5-carboxymethylaminomethyl modification enzyme MnmG (661 aa).

Residue 13 to 18 (GGGHAG) coordinates FAD. Position 285–299 (285–299 (GPRYCPSVEDKINRF)) interacts with NAD(+).

It belongs to the MnmG family. Homodimer. Heterotetramer of two MnmE and two MnmG subunits. It depends on FAD as a cofactor.

The protein resides in the cytoplasm. In terms of biological role, NAD-binding protein involved in the addition of a carboxymethylaminomethyl (cmnm) group at the wobble position (U34) of certain tRNAs, forming tRNA-cmnm(5)s(2)U34. This chain is tRNA uridine 5-carboxymethylaminomethyl modification enzyme MnmG, found in Acidovorax sp. (strain JS42).